A 534-amino-acid polypeptide reads, in one-letter code: GMP synthase [glutamine-hydrolyzing] (534 aa).

Residues 20 to 210 (MLIILDFGSQ…VYHICDCEPT (191 aa)) form the Glutamine amidotransferase type-1 domain. Catalysis depends on cysteine 97, which acts as the Nucleophile. Catalysis depends on residues histidine 184 and glutamate 186. Residues 211-409 (WTTETFVEEA…LGLPEEIVKR (199 aa)) enclose the GMPS ATP-PPase domain. 238 to 244 (SGGVDSS) is an ATP binding site.

As to quaternary structure, homodimer.

The enzyme catalyses XMP + L-glutamine + ATP + H2O = GMP + L-glutamate + AMP + diphosphate + 2 H(+). The protein operates within purine metabolism; GMP biosynthesis; GMP from XMP (L-Gln route): step 1/1. In terms of biological role, catalyzes the synthesis of GMP from XMP. The polypeptide is GMP synthase [glutamine-hydrolyzing] (Synechococcus sp. (strain ATCC 27144 / PCC 6301 / SAUG 1402/1) (Anacystis nidulans)).